Consider the following 730-residue polypeptide: 1,4-alpha-glucan branching enzyme GlgB (730 aa).

D405 acts as the Nucleophile in catalysis. E458 (proton donor) is an active-site residue.

Belongs to the glycosyl hydrolase 13 family. GlgB subfamily. Monomer.

The enzyme catalyses Transfers a segment of a (1-&gt;4)-alpha-D-glucan chain to a primary hydroxy group in a similar glucan chain.. The protein operates within glycan biosynthesis; glycogen biosynthesis. In terms of biological role, catalyzes the formation of the alpha-1,6-glucosidic linkages in glycogen by scission of a 1,4-alpha-linked oligosaccharide from growing alpha-1,4-glucan chains and the subsequent attachment of the oligosaccharide to the alpha-1,6 position. The sequence is that of 1,4-alpha-glucan branching enzyme GlgB from Haemophilus influenzae (strain PittGG).